The following is a 529-amino-acid chain: Cytochrome P450 monooxygenase oblE (529 aa).

Residues 38 to 58 (WQYIVTLLIAIITYDQVMYIW) traverse the membrane as a helical segment. Heme is bound at residue C477.

Belongs to the cytochrome P450 family. Heme is required as a cofactor.

Its subcellular location is the membrane. The protein operates within secondary metabolite biosynthesis; terpenoid biosynthesis. Cytochrome P450 monooxygenase; part of the gene cluster that mediates the biosynthesis of the sesterterpenes ophiobolins, fungal phytotoxins with potential anti-cancer activities. The first step of the pathway is performed by the sesterterpene synthase oblA that possesses both prenyl transferase and terpene cyclase activity, converting isopentenyl diphosphate and dimethylallyl diphosphate into geranylfarnesyl diphosphate (GFPP) and further converting GFPP into ophiobolin F, respectively. Other sesterterpenoids (C(25) terpenoids) are found as minor products of oblA. The cytochrome P450 monooxygenase oblB then catalyzes a four-step oxidative transformation of ophiobolin F to yield ophiobolin C. The function of the cytochrome P450 monooxygenase oblE has still to be determined. This is Cytochrome P450 monooxygenase oblE from Emericella variicolor (Aspergillus stellatus).